A 61-amino-acid chain; its full sequence is Metallothionein-2B (61 aa).

The residue at position 1 (M1) is an N-acetylmethionine. The tract at residues 1–29 is beta; sequence MDPNCSCATGDSCTCASSCKCKECKCTSC. The a divalent metal cation site is built by C5, C7, C13, C15, C19, C21, C24, C26, C29, C33, C34, C36, C37, C41, C44, C48, C50, C57, C59, and C60. Positions 30-61 are alpha; it reads KKSCCSCCPAGCTKCAQGCICKGASDKCSCCA.

Belongs to the metallothionein superfamily. Type 1 family. In terms of assembly, monomer.

Its function is as follows. Metallothioneins have a high content of cysteine residues that bind various heavy metals; these proteins are transcriptionally regulated by both heavy metals and glucocorticoids. In Oryctolagus cuniculus (Rabbit), this protein is Metallothionein-2B.